Consider the following 370-residue polypeptide: Histidinol-phosphate aminotransferase 1 (370 aa).

Lys222 is subject to N6-(pyridoxal phosphate)lysine.

It belongs to the class-II pyridoxal-phosphate-dependent aminotransferase family. Histidinol-phosphate aminotransferase subfamily. In terms of assembly, homodimer. Pyridoxal 5'-phosphate is required as a cofactor.

The enzyme catalyses L-histidinol phosphate + 2-oxoglutarate = 3-(imidazol-4-yl)-2-oxopropyl phosphate + L-glutamate. The protein operates within amino-acid biosynthesis; L-histidine biosynthesis; L-histidine from 5-phospho-alpha-D-ribose 1-diphosphate: step 7/9. The sequence is that of Histidinol-phosphate aminotransferase 1 from Bacillus cereus (strain ZK / E33L).